We begin with the raw amino-acid sequence, 403 residues long: Phosphopentomutase (403 aa).

Asp-13, Asp-298, His-303, Asp-339, His-340, and His-351 together coordinate Mn(2+).

The protein belongs to the phosphopentomutase family. It depends on Mn(2+) as a cofactor.

The protein localises to the cytoplasm. It carries out the reaction 2-deoxy-alpha-D-ribose 1-phosphate = 2-deoxy-D-ribose 5-phosphate. The catalysed reaction is alpha-D-ribose 1-phosphate = D-ribose 5-phosphate. It functions in the pathway carbohydrate degradation; 2-deoxy-D-ribose 1-phosphate degradation; D-glyceraldehyde 3-phosphate and acetaldehyde from 2-deoxy-alpha-D-ribose 1-phosphate: step 1/2. Its function is as follows. Isomerase that catalyzes the conversion of deoxy-ribose 1-phosphate (dRib-1-P) and ribose 1-phosphate (Rib-1-P) to deoxy-ribose 5-phosphate (dRib-5-P) and ribose 5-phosphate (Rib-5-P), respectively. The protein is Phosphopentomutase of Streptococcus pneumoniae serotype 4 (strain ATCC BAA-334 / TIGR4).